A 269-amino-acid chain; its full sequence is Imidazoleglycerol-phosphate dehydratase 2, chloroplastic (269 aa).

The transit peptide at 1–51 directs the protein to the chloroplast; it reads MTTAPFLFPSLSRLHSARASSFPKPPVGSGAGVAFPARPYGSSLRLRSSVM. Substrate contacts are provided by residues Glu-83, 109–117, 135–139, Arg-161, and Arg-183; these read HMLDQLASH and HHSNE. Residues His-109, His-135, His-136, and Glu-139 each contribute to the Mn(2+) site. His-207, His-231, His-232, and Glu-235 together coordinate Mn(2+). Substrate contacts are provided by residues 231–239 and 261–263; these read HHIIEATFK and SSK.

Belongs to the imidazoleglycerol-phosphate dehydratase family. It depends on Mn(2+) as a cofactor.

It is found in the plastid. The protein resides in the chloroplast. It catalyses the reaction D-erythro-1-(imidazol-4-yl)glycerol 3-phosphate = 3-(imidazol-4-yl)-2-oxopropyl phosphate + H2O. Its pathway is amino-acid biosynthesis; L-histidine biosynthesis; L-histidine from 5-phospho-alpha-D-ribose 1-diphosphate: step 6/9. The chain is Imidazoleglycerol-phosphate dehydratase 2, chloroplastic from Triticum aestivum (Wheat).